The chain runs to 1040 residues: Multidrug resistance protein MdtB (1040 aa).

Helical transmembrane passes span 16–36 (FIMR…AGII), 347–367 (LMMA…NIPA), 369–389 (IIPG…MVFL), 396–416 (LTLM…IVVI), 440–460 (IGFT…PLLF), 472–492 (FAIT…TLTP), 537–557 (WLTL…WVFI), 863–883 (LGST…VLGI), 888–908 (FIHP…ALLA), 911–931 (IAGS…IGIV), 968–988 (ILMT…STGV), and 998–1018 (IGMV…TPVI).

It belongs to the resistance-nodulation-cell division (RND) (TC 2.A.6) family. MdtB subfamily. As to quaternary structure, part of a tripartite efflux system composed of MdtA, MdtB and MdtC. MdtB forms a heteromultimer with MdtC.

It is found in the cell inner membrane. Functionally, the MdtABC tripartite complex confers resistance against novobiocin and deoxycholate. This is Multidrug resistance protein MdtB from Escherichia fergusonii (strain ATCC 35469 / DSM 13698 / CCUG 18766 / IAM 14443 / JCM 21226 / LMG 7866 / NBRC 102419 / NCTC 12128 / CDC 0568-73).